Reading from the N-terminus, the 106-residue chain is Large ribosomal subunit protein uL24 (106 aa).

It belongs to the universal ribosomal protein uL24 family. Part of the 50S ribosomal subunit.

In terms of biological role, one of two assembly initiator proteins, it binds directly to the 5'-end of the 23S rRNA, where it nucleates assembly of the 50S subunit. Functionally, one of the proteins that surrounds the polypeptide exit tunnel on the outside of the subunit. The polypeptide is Large ribosomal subunit protein uL24 (Laribacter hongkongensis (strain HLHK9)).